The following is a 356-amino-acid chain: Carbohydrate sulfotransferase 10 (356 aa).

The Cytoplasmic portion of the chain corresponds to 1–6 (MHHQWL). A helical; Signal-anchor for type II membrane protein membrane pass occupies residues 7 to 27 (LLAACFWVIFMFMVASKFITL). Residues 28-356 (TFKDPDGYSA…GYQKPDFLLN (329 aa)) lie on the Lumenal side of the membrane. A glycan (N-linked (GlcNAc...) asparagine) is linked at Asn-99. 3'-phosphoadenylyl sulfate-binding positions include 127–133 (PKVGNTQ) and 189–197 (RDPFERLIS). Asn-228 and Asn-316 each carry an N-linked (GlcNAc...) asparagine glycan.

Belongs to the sulfotransferase 2 family.

The protein localises to the golgi apparatus membrane. The catalysed reaction is 3-O-{beta-D-GlcA-(1-&gt;[3)-alpha-D-Xyl-(1-&gt;3)-beta-D-GlcA-(1-&gt;](n)-4)-beta-D-Xyl-(1-&gt;4)-Rib-ol-P-Rib-ol-P-3-beta-D-GalNAc-(1-&gt;3)-beta-D-GlcNAc-(1-&gt;4)-O-6-P-alpha-D-Man}-L-Thr-[protein] + 3'-phosphoadenylyl sulfate = 3-O-{O-3-S-beta-D-GlcA-(1-&gt;[3)-alpha-D-Xyl-(1-&gt;3)-beta-D-GlcA-(1-&gt;](n)-4)-beta-D-Xyl-(1-&gt;4)-Rib-ol-P-Rib-ol-P-3-beta-D-GalNAc-(1-&gt;3)-beta-D-GlcNAc-(1-&gt;4)-O-6-P-alpha-D-Man}-L-Thr-[protein] + adenosine 3',5'-bisphosphate + H(+). It catalyses the reaction 17beta-estradiol 3-O-(beta-D-glucuronate) + 3'-phosphoadenylyl sulfate = 17beta-estradiol 3-O-(3-sulfo-beta-D-glucuronate) + adenosine 3',5'-bisphosphate + H(+). It carries out the reaction 17beta-estradiol 3-O-(beta-D-glucuronate) 17-sulfate + 3'-phosphoadenylyl sulfate = 17beta-estradiol 3-O-(3-sulfo-beta-D-glucuronate) 17-sulfate + adenosine 3',5'-bisphosphate + H(+). The enzyme catalyses 17beta-estradiol 17-O-(beta-D-glucuronate) + 3'-phosphoadenylyl sulfate = 17beta-estradiol 17-O-(3-sulfo-beta-D-glucuronate) + adenosine 3',5'-bisphosphate + H(+). The catalysed reaction is 16alpha,17beta-estriol 3-O-(beta-D-glucuronate) + 3'-phosphoadenylyl sulfate = 16alpha,17beta-estriol 3-O-(3-sulfo-beta-D-glucuronate) + adenosine 3',5'-bisphosphate + H(+). It catalyses the reaction 16alpha,17beta-estriol 16-O-(beta-D-glucuronate) + 3'-phosphoadenylyl sulfate = 16alpha,17beta-estriol 16-O-(3-sulfo-beta-D-glucuronate) + adenosine 3',5'-bisphosphate + H(+). It carries out the reaction 16alpha,17beta-estriol 17-O-(beta-D-glucuronate) + 3'-phosphoadenylyl sulfate = 16alpha,17beta-estriol 17-O-(3-sulfo-beta-D-glucuronate) + adenosine 3',5'-bisphosphate + H(+). The enzyme catalyses estrone 3-O-(beta-D-glucuronate) + 3'-phosphoadenylyl sulfate = estrone 3-O-(3-sulfo-beta-D-glucuronate) + adenosine 3',5'-bisphosphate + H(+). The catalysed reaction is 3alpha,20alpha-dihydroxy-5beta-pregnane 3-O-(beta-D-glucuronate) + 3'-phosphoadenylyl sulfate = 3alpha,20alpha-dihydroxy-5beta-pregnane 3-O-(3-sulfo-beta-D-glucuronate) + adenosine 3',5'-bisphosphate + H(+). It catalyses the reaction testosterone 17-O-(beta-D-glucuronate) + 3'-phosphoadenylyl sulfate = testosterone 17-O-(3-sulfo-beta-D-glucuronate) + adenosine 3',5'-bisphosphate + H(+). It carries out the reaction 3beta-androst-5-en-17-one 3-O-(beta-D-glucuronate) + 3'-phosphoadenylyl sulfate = 3beta-androst-5-en-17-one 3-O-(3-sulfo-beta-D-glucuronate) + adenosine 3',5'-bisphosphate + H(+). The enzyme catalyses 3alpha,17alpha-dihydroxy-5beta-androstane-11-one-17beta-carboxylate 3-O-(beta-D-glucuronate) + 3'-phosphoadenylyl sulfate = 3alpha,17alpha-dihydroxy-5beta-androstane-11-one-17beta-carboxylate 3-O-(3-sulfo-beta-D-glucuronate) + adenosine 3',5'-bisphosphate + H(+). The catalysed reaction is 3alpha-hydroxyetiocholan-17-one 3-O-(beta-D-glucuronate) + 3'-phosphoadenylyl sulfate = 3alpha-hydroxyetiocholan-17-one 3-O-(3-sulfo-beta-D-glucuronate) + adenosine 3',5'-bisphosphate + H(+). It functions in the pathway steroid metabolism. Its pathway is protein modification; carbohydrate sulfation. Its function is as follows. Catalyzes the transfer of sulfate from 3'-phosphoadenylyl sulfate (PAPS) to position 3 of terminal glucuronic acid of both protein- and lipid-linked oligosaccharides. Participates in biosynthesis of HNK-1 carbohydrate structure 3-O-sulfo-beta-D-GlcA-(1-&gt;3)-beta-D-Gal-(1-&gt;4)-D-GlcNAc-R, a sulfated glucuronyl-lactosaminyl residue carried by many neural recognition molecules, which is involved in cell interactions during ontogenetic development and in synaptic plasticity in the adult. May be indirectly involved in synapse plasticity of the hippocampus, via its role in HNK-1 biosynthesis. Sulfates terminal glucuronyl residue of the laminin globular (LG)-domain binding epitope on DAG1/alpha-dystroglycan and prevents further polymerization by LARGE1 glycosyltransferase. Likely defines the chain length of LG epitope, conferring binding specificity to extracellular matrix components. Plays a role in down-regulating the steroid hormones. Sulfates glucuronidated estrogens and androgens with an impact in hormone cycle and fertility. Has a preference for glucuronyl moiety at the 3-hydroxyl group of a sterol ring rather than the 17-hydroxyl group, showing high catalytic efficiency for 17beta-estradiol 3-O-(beta-D-glucuronate) and dehydroepiandrosterone 3-O-(beta-D-glucuronate) hormones. The chain is Carbohydrate sulfotransferase 10 from Mus musculus (Mouse).